A 128-amino-acid chain; its full sequence is Cytochrome c-type biogenesis protein CcmE (128 aa).

Over 1–7 (MKKKHKR) the chain is Cytoplasmic. The chain crosses the membrane as a helical; Signal-anchor for type II membrane protein span at residues 8–28 (LLVASGIFFFLNCIVFFILTI). At 29–128 (LRENISFFYT…KHDENYMPRK (100 aa)) the chain is on the extracellular side. Heme-binding residues include His120 and Tyr124.

Belongs to the CcmE/CycJ family.

It localises to the cell membrane. Functionally, heme chaperone required for the biogenesis of c-type cytochromes. Transiently binds heme delivered by CcmC and transfers the heme to apo-cytochromes in a process facilitated by CcmF and CcmH. The polypeptide is Cytochrome c-type biogenesis protein CcmE (Wolbachia sp. subsp. Brugia malayi (strain TRS)).